The primary structure comprises 363 residues: 3-isopropylmalate dehydrogenase (363 aa).

An NAD(+)-binding site is contributed by Gly79–Glu92. 4 residues coordinate substrate: Arg100, Arg110, Arg139, and Asp228. Mg(2+) is bound by residues Asp228, Asp252, and Asp256. Gly286–Asn298 lines the NAD(+) pocket.

This sequence belongs to the isocitrate and isopropylmalate dehydrogenases family. LeuB type 1 subfamily. Homodimer. It depends on Mg(2+) as a cofactor. Mn(2+) is required as a cofactor.

Its subcellular location is the cytoplasm. The catalysed reaction is (2R,3S)-3-isopropylmalate + NAD(+) = 4-methyl-2-oxopentanoate + CO2 + NADH. It participates in amino-acid biosynthesis; L-leucine biosynthesis; L-leucine from 3-methyl-2-oxobutanoate: step 3/4. Its function is as follows. Catalyzes the oxidation of 3-carboxy-2-hydroxy-4-methylpentanoate (3-isopropylmalate) to 3-carboxy-4-methyl-2-oxopentanoate. The product decarboxylates to 4-methyl-2 oxopentanoate. This is 3-isopropylmalate dehydrogenase from Vibrio vulnificus (strain CMCP6).